The following is a 66-amino-acid chain: Large ribosomal subunit protein bL35 (66 aa).

A compositionally biased stretch (basic residues) spans Met1–His26. The tract at residues Met1–Thr29 is disordered.

It belongs to the bacterial ribosomal protein bL35 family.

In Geobacillus kaustophilus (strain HTA426), this protein is Large ribosomal subunit protein bL35.